The primary structure comprises 438 residues: 3-phosphoshikimate 1-carboxyvinyltransferase (438 aa).

3 residues coordinate 3-phosphoshikimate: Lys25, Ser26, and Arg30. Position 25 (Lys25) interacts with phosphoenolpyruvate. Phosphoenolpyruvate contacts are provided by Gly99 and Arg128. Residues Ser173, Gln175, Asp325, and Lys352 each contribute to the 3-phosphoshikimate site. Gln175 is a phosphoenolpyruvate binding site. Catalysis depends on Asp325, which acts as the Proton acceptor. Phosphoenolpyruvate is bound by residues Arg356 and Arg398.

The protein belongs to the EPSP synthase family. In terms of assembly, monomer.

The protein localises to the cytoplasm. It carries out the reaction 3-phosphoshikimate + phosphoenolpyruvate = 5-O-(1-carboxyvinyl)-3-phosphoshikimate + phosphate. It participates in metabolic intermediate biosynthesis; chorismate biosynthesis; chorismate from D-erythrose 4-phosphate and phosphoenolpyruvate: step 6/7. Functionally, catalyzes the transfer of the enolpyruvyl moiety of phosphoenolpyruvate (PEP) to the 5-hydroxyl of shikimate-3-phosphate (S3P) to produce enolpyruvyl shikimate-3-phosphate and inorganic phosphate. The chain is 3-phosphoshikimate 1-carboxyvinyltransferase from Prochlorococcus marinus (strain MIT 9515).